We begin with the raw amino-acid sequence, 399 residues long: MSQRQPQSPNQTLISTTNDTESSSSVVPNDSTNKRRTGDNSPGIEALCAIYITYAVIISVGILGNAILIKVFFKTKSMQTVPNIFITSLAFGDLLLLLTCVPVDVTHYLAEGWLFGRIGCKVLSFIRLTSVGVSVFTLTILSADRYKAVVKPLERQPPNAILKTCAKAGCIWIMSMIIALPEAIFSNVYTFQDPDKNVTFKACASYPVSERLLQEIHSLLCFLVFYIIPLSIISVYYSLIARTLYKSTLNIPTEEQRHARKQIESRKRIAKTVLVLVALFALCWLPNHLLYLYRSFTSQTYMDSSTVHLFVTIISRILAFSNSCVNPFALYWLSNTFQQHFKAQLFCCKAGRPDPTAANTPLDNLAVMGRVPGAASTQMSEISVSPFTGCSVKKEDDRV.

Positions Met1 to Ser31 are enriched in polar residues. Positions Met1–Gly38 are disordered. Over Met1–Ser41 the chain is Extracellular. N-linked (GlcNAc...) asparagine glycosylation is found at Asn10, Asn18, and Asn29. Residues Pro42–Leu63 traverse the membrane as a helical segment. Residues Gly64–Pro82 are Cytoplasmic-facing. The chain crosses the membrane as a helical span at residues Asn83–Val103. Over Asp104–Lys121 the chain is Extracellular. A disulfide bridge links Cys120 with Cys203. Residues Val122 to Ala143 form a helical membrane-spanning segment. Over Asp144 to Lys163 the chain is Cytoplasmic. The chain crosses the membrane as a helical span at residues Thr164–Ile184. Residues Phe185–Leu220 lie on the Extracellular side of the membrane. Residues Cys221–Ala241 form a helical membrane-spanning segment. At Arg242–Thr272 the chain is on the cytoplasmic side. The chain crosses the membrane as a helical span at residues Val273–Tyr293. At Arg294–Ile313 the chain is on the extracellular side. A helical transmembrane segment spans residues Ile314 to Leu333. The Cytoplasmic segment spans residues Ser334–Val399.

It belongs to the G-protein coupled receptor 1 family. Interacts with C6orf89.

It localises to the cell membrane. Functionally, role in sperm cell division, maturation, or function. This receptor mediates its action by association with G proteins that activate a phosphatidylinositol-calcium second messenger system. The protein is Bombesin receptor subtype-3 (BRS3) of Ovis aries (Sheep).